We begin with the raw amino-acid sequence, 635 residues long: PTS system fructose-specific EIIABC component (635 aa).

The region spanning 5–149 (ELLTKHTIKL…DAIIDIINQH (145 aa)) is the PTS EIIA type-2 domain. Residue His67 is the Tele-phosphohistidine intermediate; for EIIA activity of the active site. His67 carries the post-translational modification Phosphohistidine; by HPr. The tract at residues 149–168 (HDKDDDEEEEEEEAAPAPAG) is disordered. Acidic residues predominate over residues 152-162 (DDDEEEEEEEA). Positions 172–267 (ILAVTACPTG…PQELIEKAMN (96 aa)) constitute a PTS EIIB type-2 domain. The active-site Phosphocysteine intermediate; for EIIB activity is Cys178. Cys178 is modified (phosphocysteine; by EIIA). Residues 273-293 (YQGSGGGSAASNDDEEAKGKS) form a disordered region. The region spanning 301–635 (FYKHLMSGVS…GIVKKPVTEK (335 aa)) is the PTS EIIC type-2 domain. The next 9 helical transmembrane spans lie at 312–332 (MLPF…WGIH), 350–370 (FIGG…FIAM), 392–412 (NAGF…VILL), 428–448 (PVLI…QFVV), 470–490 (NLVL…GGPL), 511–531 (AAIM…TTIF), 544–564 (ITCY…FAAA), 569–589 (VIPA…FFRV), and 608–628 (MLYL…LGIV).

It localises to the cell membrane. The enzyme catalyses D-fructose(out) + N(pros)-phospho-L-histidyl-[protein] = D-fructose 1-phosphate(in) + L-histidyl-[protein]. The phosphoenolpyruvate-dependent sugar phosphotransferase system (sugar PTS), a major carbohydrate active transport system, catalyzes the phosphorylation of incoming sugar substrates concomitantly with their translocation across the cell membrane. This system is involved in fructose transport. The sequence is that of PTS system fructose-specific EIIABC component (fruA) from Bacillus subtilis (strain 168).